The primary structure comprises 135 residues: Small ribosomal subunit protein uS12 (135 aa).

Residue D89 is modified to 3-methylthioaspartic acid. The segment at 101 to 135 is disordered; it reads SLDTSGVADRKQSRSKYGAKQPKAGAAAPVKGKRR. Over residues 116–135 the composition is skewed to low complexity; the sequence is KYGAKQPKAGAAAPVKGKRR.

The protein belongs to the universal ribosomal protein uS12 family. As to quaternary structure, part of the 30S ribosomal subunit. Contacts proteins S8 and S17. May interact with IF1 in the 30S initiation complex.

With S4 and S5 plays an important role in translational accuracy. Its function is as follows. Interacts with and stabilizes bases of the 16S rRNA that are involved in tRNA selection in the A site and with the mRNA backbone. Located at the interface of the 30S and 50S subunits, it traverses the body of the 30S subunit contacting proteins on the other side and probably holding the rRNA structure together. The combined cluster of proteins S8, S12 and S17 appears to hold together the shoulder and platform of the 30S subunit. The polypeptide is Small ribosomal subunit protein uS12 (Chlorobium phaeobacteroides (strain DSM 266 / SMG 266 / 2430)).